The primary structure comprises 192 residues: Adenylate kinase (192 aa).

Gly-10 to Thr-18 is a binding site for ATP.

Belongs to the archaeal adenylate kinase family. In terms of assembly, monomer.

It localises to the cytoplasm. The enzyme catalyses AMP + ATP = 2 ADP. This is Adenylate kinase (adkA) from Methanococcus voltae.